The sequence spans 518 residues: MSPQESSVQPSQFLLLVGIPVASALLLAQCLRWHCCQWLPGTCRKPDDPEEPVSPSTPLPEYELPRQCPAPTLPEVAAFYQELHMPTQGQTVTRQMMHKLLVFSAREVDHRGGCLILQDTGISLLIPPGAVTVGRQERVSLVLVWDLTDAPSLSHRQGLVSPVVACGPHGASFLKPCTLTFKHCAQQPSQACAYSSNTSLLDAKDWKPLGQPGTHISRDECRILLSHFSLYTCVLEAPLGQTARKWLQLAMFCSPLVPGQTHLQLRVYFLNNTPCALQWAITNEQPHGGRMRGPCQLFDFTGARADQCLKLKYISEGWENVDDSSSQLVPHLHIWHGKCPFRSFCFRRKAANGNEECSALTNEIIVTMHTFQDGLETKYVEILRFQASEEETWAVPPPVSQPPLCNRLPPELFEQLQMLLEPNSVTGNDWRRLASHLGLCGMKIRFLSCQRSPAAAILELFEEQNGSLQELHYLMTSMERLDCASAIQNYLNRSPRGSPDRLHGGTWENHGLELDEKL.

The Extracellular portion of the chain corresponds to 1 to 10; sequence MSPQESSVQP. A helical; Signal-anchor for type III membrane protein membrane pass occupies residues 11-31; the sequence is SQFLLLVGIPVASALLLAQCL. Residues 32–518 lie on the Cytoplasmic side of the membrane; sequence RWHCCQWLPG…NHGLELDEKL (487 aa). Residues 102-237 form the ZU5 domain; that stretch reads VFSAREVDHR…FSLYTCVLEA (136 aa). Residues 186-400 are interaction with RELA and NFKB1; the sequence is QQPSQACAYS…ETWAVPPPVS (215 aa). The tract at residues 208–235 is peptidase S68; sequence PLGQPGTHISRDECRILLSHFSLYTCVL. Catalysis depends on residues H227 and S229. The region spanning 415 to 494 is the Death domain; sequence QLQMLLEPNS…SAIQNYLNRS (80 aa).

This sequence belongs to the unc-5 family. Interacts with p65/RELA and NFKB1.

It is found in the membrane. It localises to the cytoplasm. Inhibits NF-kappa-B-dependent transcription by impairing NF-kappa-B binding to its targets. In Mus musculus (Mouse), this protein is UNC5C-like protein (Unc5cl).